The following is a 690-amino-acid chain: Quinohemoprotein alcohol dehydrogenase ADH IIB (690 aa).

An N-terminal signal peptide occupies residues 1 to 22 (MKKPLRTSLLMLCLATPLAALA). E81 is a pyrroloquinoline quinone binding site. Cysteines 127 and 128 form a disulfide. Pyrroloquinoline quinone contacts are provided by residues R133, T177, and 193-194 (GA). E195 contacts Ca(2+). Residue T252 participates in pyrroloquinoline quinone binding. Ca(2+) is bound by residues N272 and D317. Residue D317 is the Proton acceptor of the active site. Residues K344, 404–405 (NW), and V547 each bind pyrroloquinoline quinone. One can recognise a Cytochrome c domain in the interval 600–678 (EQVQAGKQLY…QIKLYVMSRE (79 aa)). Residues C613, C616, H617, and M655 each coordinate heme c.

Belongs to the bacterial PQQ dehydrogenase family. As to quaternary structure, monomer. The cofactor is pyrroloquinoline quinone. It depends on Ca(2+) as a cofactor. Requires heme c as cofactor.

It localises to the periplasm. The enzyme catalyses 2 oxidized [azurin] + a primary alcohol = 2 reduced [azurin] + an aldehyde + 2 H(+). With respect to regulation, inhibited by 10 mM 1-butanol. In terms of biological role, catalyzes the dye-linked oxidation of primary alcohols to the corresponding aldehydes and the (subsequent) oxidation of the aldehydes to carboxylic acids. Exhibits activity with longer mono-alcohols (C-4 to C-7) but not with methanol or glycerol. Reacts with 1,2-propanediol and 1,3-propanediol but not with sugar alcohols such as D-sorbitol. In Pseudomonas putida (Arthrobacter siderocapsulatus), this protein is Quinohemoprotein alcohol dehydrogenase ADH IIB.